The primary structure comprises 229 residues: Cytochrome c oxidase subunit 2 (229 aa).

Residues 1–14 (MPTPNQTNFQDAAS) lie on the Mitochondrial intermembrane side of the membrane. A helical transmembrane segment spans residues 15–45 (PLMEELTHFHDHTLMIVFMISLLVLYILLSM). Residues 46–59 (LSTKLTHTNTANAQ) lie on the Mitochondrial matrix side of the membrane. A helical membrane pass occupies residues 60–87 (QAEMVWTILPAIILITIALPSLQILYMM). Residues 88-229 (DEINKPHMTI…DLWLAMIDTL (142 aa)) lie on the Mitochondrial intermembrane side of the membrane. His-161, Cys-196, Glu-198, Cys-200, His-204, and Met-207 together coordinate Cu cation. Glu-198 provides a ligand contact to Mg(2+).

Belongs to the cytochrome c oxidase subunit 2 family. In terms of assembly, component of the cytochrome c oxidase (complex IV, CIV), a multisubunit enzyme composed of 14 subunits. The complex is composed of a catalytic core of 3 subunits MT-CO1, MT-CO2 and MT-CO3, encoded in the mitochondrial DNA, and 11 supernumerary subunits COX4I, COX5A, COX5B, COX6A, COX6B, COX6C, COX7A, COX7B, COX7C, COX8 and NDUFA4, which are encoded in the nuclear genome. The complex exists as a monomer or a dimer and forms supercomplexes (SCs) in the inner mitochondrial membrane with NADH-ubiquinone oxidoreductase (complex I, CI) and ubiquinol-cytochrome c oxidoreductase (cytochrome b-c1 complex, complex III, CIII), resulting in different assemblies (supercomplex SCI(1)III(2)IV(1) and megacomplex MCI(2)III(2)IV(2)). Found in a complex with TMEM177, COA6, COX18, COX20, SCO1 and SCO2. Interacts with TMEM177 in a COX20-dependent manner. Interacts with COX20. Interacts with COX16. Requires Cu cation as cofactor.

It is found in the mitochondrion inner membrane. It catalyses the reaction 4 Fe(II)-[cytochrome c] + O2 + 8 H(+)(in) = 4 Fe(III)-[cytochrome c] + 2 H2O + 4 H(+)(out). Component of the cytochrome c oxidase, the last enzyme in the mitochondrial electron transport chain which drives oxidative phosphorylation. The respiratory chain contains 3 multisubunit complexes succinate dehydrogenase (complex II, CII), ubiquinol-cytochrome c oxidoreductase (cytochrome b-c1 complex, complex III, CIII) and cytochrome c oxidase (complex IV, CIV), that cooperate to transfer electrons derived from NADH and succinate to molecular oxygen, creating an electrochemical gradient over the inner membrane that drives transmembrane transport and the ATP synthase. Cytochrome c oxidase is the component of the respiratory chain that catalyzes the reduction of oxygen to water. Electrons originating from reduced cytochrome c in the intermembrane space (IMS) are transferred via the dinuclear copper A center (CU(A)) of subunit 2 and heme A of subunit 1 to the active site in subunit 1, a binuclear center (BNC) formed by heme A3 and copper B (CU(B)). The BNC reduces molecular oxygen to 2 water molecules using 4 electrons from cytochrome c in the IMS and 4 protons from the mitochondrial matrix. This is Cytochrome c oxidase subunit 2 (MT-CO2) from Pelomedusa subrufa (African side-necked turtle).